Reading from the N-terminus, the 417-residue chain is CinA-like protein (417 aa).

The protein belongs to the CinA family.

The protein is CinA-like protein of Synechococcus sp. (strain RCC307).